The sequence spans 240 residues: Ubiquinone biosynthesis O-methyltransferase (240 aa).

Positions 44, 64, 85, and 129 each coordinate S-adenosyl-L-methionine.

The protein belongs to the methyltransferase superfamily. UbiG/COQ3 family.

It carries out the reaction a 3-demethylubiquinol + S-adenosyl-L-methionine = a ubiquinol + S-adenosyl-L-homocysteine + H(+). It catalyses the reaction a 3-(all-trans-polyprenyl)benzene-1,2-diol + S-adenosyl-L-methionine = a 2-methoxy-6-(all-trans-polyprenyl)phenol + S-adenosyl-L-homocysteine + H(+). Its pathway is cofactor biosynthesis; ubiquinone biosynthesis. Functionally, O-methyltransferase that catalyzes the 2 O-methylation steps in the ubiquinone biosynthetic pathway. In Escherichia coli O7:K1 (strain IAI39 / ExPEC), this protein is Ubiquinone biosynthesis O-methyltransferase.